A 414-amino-acid chain; its full sequence is MSLVDLGKRLLEAARKGQDDEVRTLMANGAPFTTDWLGTSPLHLAAQYGHYSTAEVLLRAGVSRDARTKVDRTPLHMAAADGHVHIVELLVRSGADVNAKDMLQMTALHWATEHHHRDVVELLIKYGADVYAFSKFDKSAFDIAMEKNNTEILVMLQEAMQNQVNTNHERANPVANPVTVTAPFIFTSGEVINLASFVSSANTKATSAHLEEMEEGNSLDSSTQQVVGSGGQRVITIVTDGVPLGNIQTSLPAGGIGQPFIVTMQDGQQVLTVPAGQVAEETIIEDEEEEEEKLPLVKRPRMAEMTNRVEEMKEGSERELLQQQLQEANRRAQEYRHQLLKKEQEAEQYRLRLEAMAQQQTNGVEVDVTVVEEVAEVDAVVVTEGDEVERATQVMKSGRTTEPHTNVSIETISS.

ANK repeat units lie at residues 5–34 (DLGK…PFTT), 37–66 (LGTS…SRDA), 70–99 (VDRT…DVNA), 103–132 (LQMT…DVYA), and 136–166 (FDKS…QVNT). Ser218 is subject to Phosphoserine. Residues 310–362 (EEMKEGSERELLQQQLQEANRRAQEYRHQLLKKEQEAEQYRLRLEAMAQQQTN) are a coiled coil.

As to quaternary structure, heterotetramer of two alpha and two beta subunits. The C-terminal is necessary for the formation of a heterotetrameric GABP-alpha-2/beta-2 complex, and also facilitates homotypic dimerization. Interacts with ADGRB2. High levels in thymus, spleen, kidney and intestine.

It localises to the nucleus. Functionally, transcription factor capable of interacting with purine rich repeats (GA repeats). Must associate with GABP-alpha to bind DNA. The chain is GA-binding protein subunit beta-2 (Gabpb2) from Mus musculus (Mouse).